A 196-amino-acid polypeptide reads, in one-letter code: Proteasome subunit beta 1 (196 aa).

Positions 1 to 6 are cleaved as a propeptide — removed in mature form; by autocatalysis; that stretch reads MEELPA. T7 acts as the Nucleophile in catalysis.

The protein belongs to the peptidase T1B family. The 20S proteasome core is composed of 14 alpha and 14 beta subunits that assemble into four stacked heptameric rings, resulting in a barrel-shaped structure. The two inner rings, each composed of seven catalytic beta subunits, are sandwiched by two outer rings, each composed of seven alpha subunits. The catalytic chamber with the active sites is on the inside of the barrel. Has a gated structure, the ends of the cylinder being occluded by the N-termini of the alpha-subunits. Is capped at one or both ends by the proteasome regulatory ATPase, PAN.

It is found in the cytoplasm. It catalyses the reaction Cleavage of peptide bonds with very broad specificity.. With respect to regulation, the formation of the proteasomal ATPase PAN-20S proteasome complex, via the docking of the C-termini of PAN into the intersubunit pockets in the alpha-rings, triggers opening of the gate for substrate entry. Interconversion between the open-gate and close-gate conformations leads to a dynamic regulation of the 20S proteasome proteolysis activity. Functionally, component of the proteasome core, a large protease complex with broad specificity involved in protein degradation. The chain is Proteasome subunit beta 1 from Saccharolobus solfataricus (strain ATCC 35092 / DSM 1617 / JCM 11322 / P2) (Sulfolobus solfataricus).